A 1492-amino-acid chain; its full sequence is MERLLAQLCGSSAAWPLPLWEGDTTGHCFTQLVLSALPHALLAVLSACYLGTPRSPDYILPCSPGWRLRLAASFLLSVFPLLDLLPVALPPGAGPGPIGLEVLAGCVAAVAWISHSLALWVLAHSPHGHSRGPLALALVALLPAPALVLTVLWHCQRGTLLPPLLPGPMARLCLLILQLAALLAYALGWAAPGGPREPWAQEPLLPEDQEPEVAEDGESWLSRFSYAWLAPLLARGACGELRQPQDICRLPHRLQPTYLARVFQAHWQEGARLWRALYGAFGRCYLALGLLKLVGTMLGFSGPLLLSLLVGFLEEGQEPLSHGLLYALGLAGGAVLGAVLQNQYGYEVYKVTLQARGAVLNILYCKALQLGPSRPPTGEALNLLGTDSERLLNFAGSFHEAWGLPLQLAITLYLLYQQVGVAFVGGLILALLLVPVNKVIATRIMASNQEMLQHKDARVKLVTELLSGIRVIKFCGWEQALGARVEACRARELGRLRVIKYLDAACVYLWAALPVVISIVIFITYVLMGHQLTATKVFTALALVRMLILPLNNFPWVINGLLEAKVSLDRIQLFLDLPNHNPQAYYSPDPPAEPSTVLELHGALFSWDPVGTSLETFISHLEVKKGMLVGIVGKVGCGKSSLLAAIAGELHRLRGHVAVRGLSKGFGLATQEPWIQFATIRDNILFGKTFDAQLYKEVLEACALNDDLSILPAGDQTEVGEKGVTLSGGQRARIALARAVYQEKELYLLDDPLAAVDADVANHLLHRCILGMLSYTTRLLCTHRTEYLERADAVLLMEAGRLIRAGPPSEILPLVQAVPKAWAENGQESDSATAQSVQNPEKTKEGLEEEQSTSGRLLQEESKKEGAVALHVYQAYWKAVGQGLALAILFSLLLMQATRNAADWWLSHWISQLKAENSSQEAQPSTSPASMGLFSPQLLLFSPGNLYIPVFPLPKAAPNGSSDIRFYLTVYATIAGVNSLCTLLRAVLFAAGTLQAAATLHRRLLHRVLMAPVTFFNATPTGRILNRFSSDVACADDSLPFILNILLANAAGLLGLLAVLGSGLPWLLLLLPPLSIMYYHVQRHYRASSRELRRLGSLTLSPLYSHLADTLAGLSVLRATGATYRFEEENLRLLELNQRCQFATSATMQWLDIRLQLMGAAVVSAIAGIALVQHQQGLANPGLVGLSLSYALSLTGLLSGLVSSFTQTEAMLVSVERLEEYTCDLPQEPQGQPLQLGTGWLTQGGVEFQDVVLAYRPGLPNALDGVTFCVQPGEKLGIVGRTGSGKSSLLLVLFRLLEPSSGRVLLDGVDTSQLELAQLRSQLAIIPQEPFLFSGTVRENLDPQGLHKDRALWQALKQCHLSEVITSMGGLDGELGEGGRSLSLGQRQLLCLARALLTDAKILCIDEATASVDQKTDQLLQQTICKRFANKTVLTIAHRLNTILNSDRVLVLQAGRVVELDSPATLRNQPHSLFQQLLQSSQQGVPASLGGP.

Transmembrane regions (helical) follow at residues 32–52 (LVLS…YLGT), 70–90 (LAAS…VALP), 102–122 (VLAG…LWVL), 133–153 (PLAL…TVLW), 172–192 (LCLL…WAAP), 293–313 (LVGT…VGFL), 320–340 (LSHG…GAVL), 391–411 (LLNF…LAIT), and 414–434 (LLYQ…LLLV). Residues 285–563 (YLALGLLKLV…FPWVINGLLE (279 aa)) form the ABC transmembrane type-1 1 domain. Phosphothreonine is present on Thr-463. Residue Ser-467 is modified to Phosphoserine. 2 consecutive transmembrane segments (helical) span residues 507–527 (VYLW…TYVL) and 538–558 (FTAL…PWVI). Residues 598–824 (LELHGALFSW…VQAVPKAWAE (227 aa)) enclose the ABC transporter 1 domain. An ATP-binding site is contributed by 633–640 (GKVGCGKS). The tract at residues 825–860 (NGQESDSATAQSVQNPEKTKEGLEEEQSTSGRLLQE) is disordered. Positions 826–840 (GQESDSATAQSVQNP) are enriched in polar residues. Helical transmembrane passes span 875-895 (AYWK…LLLM), 933-953 (LFSP…VFPL), 974-994 (IAGV…AGTL), 1051-1071 (AGLL…LLLL), 1153-1173 (IRLQ…ALVQ), and 1182-1202 (GLVG…SGLV). Residues 885 to 1210 (ALAILFSLLL…LVSSFTQTEA (326 aa)) form the ABC transmembrane type-1 2 domain. The ABC transporter 2 domain maps to 1246 to 1479 (VEFQDVVLAY…PHSLFQQLLQ (234 aa)). Residue 1280 to 1287 (GRTGSGKS) coordinates ATP.

It belongs to the ABC transporter superfamily. ABCC family. Conjugate transporter (TC 3.A.1.208) subfamily. In terms of tissue distribution, in testis, localized to peritubular myoid cells, Leydig cells, along the basal membrane of Sertoli cells, moderately in the adluminal compartment of the seminiferous tubules, and in vascular endothelial cells. Specifically expressed in spleen. As to expression, widely expressed.

Its subcellular location is the cell membrane. The protein resides in the basolateral cell membrane. The protein localises to the basal cell membrane. It carries out the reaction ATP + H2O + xenobioticSide 1 = ADP + phosphate + xenobioticSide 2.. The enzyme catalyses an S-substituted glutathione(in) + ATP + H2O = an S-substituted glutathione(out) + ADP + phosphate + H(+). The catalysed reaction is 17beta-estradiol 17-O-(beta-D-glucuronate)(in) + ATP + H2O = 17beta-estradiol 17-O-(beta-D-glucuronate)(out) + ADP + phosphate + H(+). It catalyses the reaction leukotriene C4(in) + ATP + H2O = leukotriene C4(out) + ADP + phosphate + H(+). Its function is as follows. ATP-dependent transporter of the ATP-binding cassette (ABC) family that actively extrudes physiological compounds, and xenobiotics from cells. Lipophilic anion transporter that mediates ATP-dependent transport of glucuronide conjugates such as estradiol-17-beta-o-glucuronide and GSH conjugates such as leukotriene C4 (LTC4). May contribute to regulate the transport of organic compounds in testes across the blood-testis-barrier. Mediates multidrug resistance (MDR) in cancer cells by preventing the intracellular accumulation of certain antitumor drugs, such as, docetaxel and paclitaxel. Does not transport glycocholic acid, taurocholic acid, MTX, folic acid, cAMP, or cGMP. The chain is ATP-binding cassette sub-family C member 10 (ABCC10) from Homo sapiens (Human).